Consider the following 334-residue polypeptide: Aspartate carbamoyltransferase catalytic subunit (334 aa).

Residues Arg-71 and Thr-72 each coordinate carbamoyl phosphate. Position 99 (Lys-99) interacts with L-aspartate. The carbamoyl phosphate site is built by Arg-121, His-151, and Gln-154. L-aspartate is bound by residues Arg-184 and Arg-239. 2 residues coordinate carbamoyl phosphate: Gly-280 and Pro-281.

It belongs to the aspartate/ornithine carbamoyltransferase superfamily. ATCase family. Heterododecamer (2C3:3R2) of six catalytic PyrB chains organized as two trimers (C3), and six regulatory PyrI chains organized as three dimers (R2).

The catalysed reaction is carbamoyl phosphate + L-aspartate = N-carbamoyl-L-aspartate + phosphate + H(+). It participates in pyrimidine metabolism; UMP biosynthesis via de novo pathway; (S)-dihydroorotate from bicarbonate: step 2/3. In terms of biological role, catalyzes the condensation of carbamoyl phosphate and aspartate to form carbamoyl aspartate and inorganic phosphate, the committed step in the de novo pyrimidine nucleotide biosynthesis pathway. The polypeptide is Aspartate carbamoyltransferase catalytic subunit (Pseudomonas savastanoi pv. phaseolicola (strain 1448A / Race 6) (Pseudomonas syringae pv. phaseolicola (strain 1448A / Race 6))).